Consider the following 701-residue polypeptide: Elongation factor G (701 aa).

The tr-type G domain occupies 8 to 291 (SRYRNIGIVA…AVIDFLPAPT (284 aa)). Residues 17 to 24 (AHVDAGKT), 89 to 93 (DTPGH), and 143 to 146 (NKMD) contribute to the GTP site.

The protein belongs to the TRAFAC class translation factor GTPase superfamily. Classic translation factor GTPase family. EF-G/EF-2 subfamily.

Its subcellular location is the cytoplasm. Catalyzes the GTP-dependent ribosomal translocation step during translation elongation. During this step, the ribosome changes from the pre-translocational (PRE) to the post-translocational (POST) state as the newly formed A-site-bound peptidyl-tRNA and P-site-bound deacylated tRNA move to the P and E sites, respectively. Catalyzes the coordinated movement of the two tRNA molecules, the mRNA and conformational changes in the ribosome. The protein is Elongation factor G of Pseudomonas fluorescens (strain Pf0-1).